The chain runs to 534 residues: Fimbrial subunit type 2 (534 aa).

The signal sequence occupies residues 1 to 32; sequence MKYNTSTLGRRAAAAAGVLTLAVLGLAPMAQA. Disordered stretches follow at residues 56 to 76 and 329 to 376; these read GDGN…GKGA and TYAE…DKDG. The segment covering 334-347 has biased composition (pro residues); that stretch reads PPAPETPPANPDNP. Positions 361–376 are enriched in basic and acidic residues; the sequence is TIKKVDGNDRSGDKDG. The LPXTG sorting signal signature appears at 492 to 496; it reads LPLTG. Pentaglycyl murein peptidoglycan amidated threonine is present on Thr-495. A propeptide spans 496-534 (removed by sortase); it reads GANGMLILTASGAALLMIAVGSVLVARYRERKRNRDLAA.

The protein localises to the secreted. It localises to the cell wall. Its subcellular location is the fimbrium. In terms of biological role, major fimbrial subunit of A.naeslundii. In Actinomyces naeslundii, this protein is Fimbrial subunit type 2.